A 1026-amino-acid polypeptide reads, in one-letter code: Phosphoenolpyruvate carboxylase (1026 aa).

Residues His-199 and Lys-672 contribute to the active site.

The protein belongs to the PEPCase type 1 family. It depends on Mg(2+) as a cofactor.

It carries out the reaction oxaloacetate + phosphate = phosphoenolpyruvate + hydrogencarbonate. In terms of biological role, forms oxaloacetate, a four-carbon dicarboxylic acid source for the tricarboxylic acid cycle. The sequence is that of Phosphoenolpyruvate carboxylase (ppc) from Nostoc sp. (strain PCC 7120 / SAG 25.82 / UTEX 2576).